Consider the following 407-residue polypeptide: 4-hydroxy-3-methylbut-2-en-1-yl diphosphate synthase (ferredoxin) (407 aa).

Cys316, Cys319, Cys350, and Glu357 together coordinate [4Fe-4S] cluster.

It belongs to the IspG family. Requires [4Fe-4S] cluster as cofactor.

The enzyme catalyses (2E)-4-hydroxy-3-methylbut-2-enyl diphosphate + 2 oxidized [2Fe-2S]-[ferredoxin] + H2O = 2-C-methyl-D-erythritol 2,4-cyclic diphosphate + 2 reduced [2Fe-2S]-[ferredoxin] + H(+). It participates in isoprenoid biosynthesis; isopentenyl diphosphate biosynthesis via DXP pathway; isopentenyl diphosphate from 1-deoxy-D-xylulose 5-phosphate: step 5/6. In terms of biological role, converts 2C-methyl-D-erythritol 2,4-cyclodiphosphate (ME-2,4cPP) into 1-hydroxy-2-methyl-2-(E)-butenyl 4-diphosphate. The protein is 4-hydroxy-3-methylbut-2-en-1-yl diphosphate synthase (ferredoxin) of Cyanothece sp. (strain PCC 7425 / ATCC 29141).